Here is a 206-residue protein sequence, read N- to C-terminus: CBS domain-containing protein CBSX3, mitochondrial (206 aa).

The N-terminal 39 residues, 1–39, are a transit peptide targeting the mitochondrion; sequence MQGVIRSFVSGGNVVKGSVLQHLRVINPAIQPSVFCSRS. 2 consecutive CBS domains span residues 61-127 and 136-194; these read MKSK…GRSS and MTEE…HREE.

It localises to the mitochondrion. This is CBS domain-containing protein CBSX3, mitochondrial (CBSX3) from Arabidopsis thaliana (Mouse-ear cress).